Reading from the N-terminus, the 130-residue chain is UPF0225 protein DR_0483 (130 aa).

Belongs to the UPF0225 family.

This chain is UPF0225 protein DR_0483, found in Deinococcus radiodurans (strain ATCC 13939 / DSM 20539 / JCM 16871 / CCUG 27074 / LMG 4051 / NBRC 15346 / NCIMB 9279 / VKM B-1422 / R1).